A 923-amino-acid chain; its full sequence is Ubiquitin carboxyl-terminal hydrolase 10 (923 aa).

The region spanning 19–134 (FTPEEEKRIV…GGPPIERKLI (116 aa)) is the DUSP domain. Residues 65 to 91 (NECSTGESSEAPRPGPIDNHDIIESDS) are disordered. In terms of domain architecture, USP spans 304 to 895 (AGLSNLGNTC…AAYVLFYRRV (592 aa)). The Nucleophile role is filled by Cys-313. The active-site Proton acceptor is the His-853.

This sequence belongs to the peptidase C19 family.

It carries out the reaction Thiol-dependent hydrolysis of ester, thioester, amide, peptide and isopeptide bonds formed by the C-terminal Gly of ubiquitin (a 76-residue protein attached to proteins as an intracellular targeting signal).. In terms of biological role, recognizes and hydrolyzes the peptide bond at the C-terminal Gly of ubiquitin. Involved in the processing of poly-ubiquitin precursors as well as that of ubiquitinated proteins. The sequence is that of Ubiquitin carboxyl-terminal hydrolase 10 (UBP10) from Arabidopsis thaliana (Mouse-ear cress).